Reading from the N-terminus, the 604-residue chain is 3-hydroxy-3-methylglutaryl-coenzyme A reductase (604 aa).

A disordered region spans residues 1-31 (MDVRRRSEKPAYPTKEFAAGEKPLKPHKQQQ). A run of 2 helical transmembrane segments spans residues 40–62 (ASDA…FFSV) and 90–110 (AIAS…IGFV). The interval 111–189 (QSFVSRDNND…PLVTPAASEE (79 aa)) is linker. Positions 190–604 (DEEIIKSVVQ…STKDVTKASS (415 aa)) are catalytic. The Charge relay system role is filled by Glu283. Asn347 carries N-linked (GlcNAc...) asparagine glycosylation. Catalysis depends on Lys415, which acts as the Charge relay system. Asn460 carries N-linked (GlcNAc...) asparagine glycosylation. Asp491 functions as the Charge relay system in the catalytic mechanism. His589 (proton donor) is an active-site residue. Asn593 carries an N-linked (GlcNAc...) asparagine glycan.

Belongs to the HMG-CoA reductase family. In terms of tissue distribution, found in protoplasts and leaves submitted to stress. Low levels found in apexes, anthers and roots.

The protein resides in the endoplasmic reticulum membrane. It catalyses the reaction (R)-mevalonate + 2 NADP(+) + CoA = (3S)-3-hydroxy-3-methylglutaryl-CoA + 2 NADPH + 2 H(+). It functions in the pathway metabolic intermediate biosynthesis; (R)-mevalonate biosynthesis; (R)-mevalonate from acetyl-CoA: step 3/3. Its function is as follows. Catalyzes the synthesis of mevalonate, the specific precursor of all isoprenoid compounds present in plants. Possible role in plant defense mechanisms as well as in the cell cycle. The protein is 3-hydroxy-3-methylglutaryl-coenzyme A reductase (HMGR) of Nicotiana sylvestris (Wood tobacco).